The following is a 417-amino-acid chain: Oxidoreductase phnG (417 aa).

Residues 16–20 (GGSYA), Arg61, and Asp317 contribute to the 6-hydroxy-FAD site.

The protein belongs to the FAD-dependent oxidoreductase family. The cofactor is 6-hydroxy-FAD.

The enzyme catalyses deoxyherqueinone + NADPH + O2 + H(+) = herqueinone + NADP(+) + H2O. The protein operates within secondary metabolite biosynthesis. Functionally, oxidoreductase; part of the gene cluster that mediates the biosynthesis of phenalenones such as herqueinone, compounds that have been reported to treat tumors, bacterial infections and/or mycoses, and rheumatic diseases. The non-reducing polyketide synthase phnA synthesizes the heptaketide backbone and cyclizes it into the angular, hemiketal-containing naphtho-gamma-pyrone prephenalenone. The product template (PT) domain of phnA catalyzes only the C4-C9 aldol condensation, which is unprecedented among known PT domains. The transformation of prephenalenone to phenalenones requires an FAD-dependent monooxygenase phnB, which catalyzes the C2 aromatic hydroxylation of prephenalenone and ring opening of the gamma-pyrone ring simultaneously. Subsequent intramolecular deprotonation of C3 phenolic oxygen accelerates phenalenone ring closure to yield the tricyclic phenalenone core with a C2 hydroxylation. The prenyltransferase phnF further catalyzes reverse C-prenylation of phenalenone by direct electrophilic substitution at C6, or possibly via first a forward O-prenylation of a neighboring phenol in phenalenone, followed by a Claisen rearrangement. The hydroalkoxylation enzyme phnH catalyzes the 5-exo-trig cyclization via acid catalysis after the spontaneous deprotonation of 7-OH, which leads to the formation of the dihydrobenzofuran atrovenetin. Atrovenetin is further converted to deoxyherqueinone by the O-methyltransferase phnC which can methylate C2-OH to stabilize the northern portion of the phenalenone core. Finally, the oxidoreductase phnG converts deoxyherqueinone to herqueinone via C6 hydroxylation. In Penicillium herquei, this protein is Oxidoreductase phnG.